The following is a 357-amino-acid chain: Histidinol-phosphate aminotransferase 1 (357 aa).

N6-(pyridoxal phosphate)lysine is present on Lys210.

The protein belongs to the class-II pyridoxal-phosphate-dependent aminotransferase family. Histidinol-phosphate aminotransferase subfamily. As to quaternary structure, homodimer. Pyridoxal 5'-phosphate serves as cofactor.

It carries out the reaction L-histidinol phosphate + 2-oxoglutarate = 3-(imidazol-4-yl)-2-oxopropyl phosphate + L-glutamate. It participates in amino-acid biosynthesis; L-histidine biosynthesis; L-histidine from 5-phospho-alpha-D-ribose 1-diphosphate: step 7/9. The protein is Histidinol-phosphate aminotransferase 1 of Methylococcus capsulatus (strain ATCC 33009 / NCIMB 11132 / Bath).